Consider the following 457-residue polypeptide: NADH-quinone oxidoreductase subunit D (457 aa).

A disordered region spans residues 1-23 (MSTHTETPVDGSAETITGAQPYE).

Belongs to the complex I 49 kDa subunit family. In terms of assembly, NDH-1 is composed of 14 different subunits. Subunits NuoB, C, D, E, F, and G constitute the peripheral sector of the complex.

Its subcellular location is the cell membrane. It carries out the reaction a quinone + NADH + 5 H(+)(in) = a quinol + NAD(+) + 4 H(+)(out). NDH-1 shuttles electrons from NADH, via FMN and iron-sulfur (Fe-S) centers, to quinones in the respiratory chain. The immediate electron acceptor for the enzyme in this species is believed to be a menaquinone. Couples the redox reaction to proton translocation (for every two electrons transferred, four hydrogen ions are translocated across the cytoplasmic membrane), and thus conserves the redox energy in a proton gradient. This is NADH-quinone oxidoreductase subunit D from Parafrankia sp. (strain EAN1pec).